The sequence spans 386 residues: DNA-directed RNA polymerase subunit Rpo1C (386 aa).

This sequence belongs to the RNA polymerase beta' chain family. Part of the RNA polymerase complex.

It localises to the cytoplasm. The catalysed reaction is RNA(n) + a ribonucleoside 5'-triphosphate = RNA(n+1) + diphosphate. Its function is as follows. DNA-dependent RNA polymerase (RNAP) catalyzes the transcription of DNA into RNA using the four ribonucleoside triphosphates as substrates. Forms part of the jaw domain. The chain is DNA-directed RNA polymerase subunit Rpo1C from Methanococcus maripaludis (strain C7 / ATCC BAA-1331).